Here is a 353-residue protein sequence, read N- to C-terminus: 3-isopropylmalate dehydrogenase (353 aa).

Glycine 76–glutamate 89 provides a ligand contact to NAD(+). Substrate is bound by residues arginine 96, arginine 106, arginine 134, and aspartate 223. Mg(2+) contacts are provided by aspartate 223, aspartate 247, and aspartate 251. Glycine 281–asparagine 293 contributes to the NAD(+) binding site.

This sequence belongs to the isocitrate and isopropylmalate dehydrogenases family. LeuB type 1 subfamily. In terms of assembly, homodimer. Requires Mg(2+) as cofactor. It depends on Mn(2+) as a cofactor.

Its subcellular location is the cytoplasm. It carries out the reaction (2R,3S)-3-isopropylmalate + NAD(+) = 4-methyl-2-oxopentanoate + CO2 + NADH. The protein operates within amino-acid biosynthesis; L-leucine biosynthesis; L-leucine from 3-methyl-2-oxobutanoate: step 3/4. Catalyzes the oxidation of 3-carboxy-2-hydroxy-4-methylpentanoate (3-isopropylmalate) to 3-carboxy-4-methyl-2-oxopentanoate. The product decarboxylates to 4-methyl-2 oxopentanoate. The polypeptide is 3-isopropylmalate dehydrogenase (Anaeromyxobacter dehalogenans (strain 2CP-C)).